The following is a 746-amino-acid chain: Root phototropism protein 3 (746 aa).

Residues 1-24 (MMWESESDGGVGVGGGGGREYGDG) are disordered. The span at 9 to 19 (GGVGVGGGGGR) shows a compositional bias: gly residues. Positions 54 to 122 (SDLLVKIGDM…CYGVPVDLTA (69 aa)) constitute a BTB domain. The NPH3 domain maps to 250 to 605 (DWWFEDVSIL…VQVLFSEQVK (356 aa)). Positions 461 to 500 (EQTEGSSPSRMSPSPSQSMYADIPRGNNNNGGGGGGNNQN) are disordered. Residues 466 to 478 (SSPSRMSPSPSQS) show a composition bias toward low complexity. Y546 carries the phosphotyrosine modification. Residues 708–746 (SKLTKMSGQESHDISSGGEQAGVDHPPPRKPRRWRNSIS) are disordered. Basic residues predominate over residues 735–746 (PRKPRRWRNSIS).

The protein belongs to the NPH3 family. As to quaternary structure, interacts with PKS1, PKS2, RPT2, PHOT1 and PHOT2. Subunit of a complex made of CAR6, PHOT1 and RPT3/NPH3. Post-translationally, phosphorylated in the dark. In terms of tissue distribution, expressed in hypocotyls, guard cells and mesophyll cells.

It localises to the cell membrane. It participates in protein modification; protein ubiquitination. Its function is as follows. May act as a substrate-specific adapter of an E3 ubiquitin-protein ligase complex (CUL3-RBX1-BTB) which mediates the ubiquitination and subsequent proteasomal degradation of target proteins. Signal transducer of the phototropic response and photo-induced movements. Involved in the phot1 pathway under low blue light (LBL) fluence rate and in the phot2 pathway under higher fluence rate of blue light (HBL). Necessary for root and hypocotyl phototropisms, but not for the regulation of stomata opening. Not involved in chloroplast accumulation and translocation. The protein is Root phototropism protein 3 (RPT3) of Arabidopsis thaliana (Mouse-ear cress).